A 215-amino-acid chain; its full sequence is LexA repressor (215 aa).

Residues 28 to 48 (RAEIAAELGFSSPNAAEEHLR) constitute a DNA-binding region (H-T-H motif). Catalysis depends on for autocatalytic cleavage activity residues Ser133 and Lys170.

Belongs to the peptidase S24 family. In terms of assembly, homodimer.

It catalyses the reaction Hydrolysis of Ala-|-Gly bond in repressor LexA.. Functionally, represses a number of genes involved in the response to DNA damage (SOS response), including recA and lexA. In the presence of single-stranded DNA, RecA interacts with LexA causing an autocatalytic cleavage which disrupts the DNA-binding part of LexA, leading to derepression of the SOS regulon and eventually DNA repair. The polypeptide is LexA repressor (Burkholderia ambifaria (strain MC40-6)).